The chain runs to 127 residues: I-Kappa-B like protein J1 (127 aa).

ANK repeat units follow at residues 43 to 76 (HGNT…DLDE) and 81 to 111 (DGDT…RFGS).

It belongs to the polydnaviridae I-Kappa-B-like protein family.

Its function is as follows. Suppresses the host immune response through NF-kappa-B inactivation. Possesses ankyrin repeat domains required for NF-kappa-B binding but lacks the regulatory regions required for dissociation from NF-kappa-B and degradation. Therefore, prevents host NF-kappa-B release and subsequent activation. This Microplitis demolitor (Parasitoid wasp) protein is I-Kappa-B like protein J1 (J2).